The chain runs to 147 residues: Testis-expressed protein 29 (147 aa).

Residues 1–57 are Extracellular-facing; it reads MRYAPEFKKSPSHLLKKFAVCDIPLYDICDYNVSRDRCKELGCCFYKGICYEKAVPS. A helical membrane pass occupies residues 58–78; sequence YVQVFSALIVIIAGAFVITII. Topologically, residues 79-147 are cytoplasmic; it reads YRVIQESRRE…IVTEEEETED (69 aa). Residues 86 to 147 are disordered; the sequence is RREKEVPTEA…IVTEEEETED (62 aa). A compositionally biased stretch (polar residues) spans 99-108; the sequence is AKSSVQVETQ. The segment covering 109–120 has biased composition (low complexity); the sequence is PPSSAGAGSKAP. Residues 125–135 are compositionally biased toward basic and acidic residues; the sequence is PQSKESGREDA.

It is found in the membrane. The chain is Testis-expressed protein 29 (TEX29) from Bos taurus (Bovine).